The sequence spans 353 residues: Nif-specific regulatory protein (353 aa).

In terms of domain architecture, Sigma-54 factor interaction spans 12-240 (IVGESAALKE…LQNCTQRTAT (229 aa)). ATP is bound by residues 40-47 (GESGTGKE) and 103-112 (AHGGTLLLDE). Positions 325–344 (QAKAARLLGRTPRQVGYSLR) form a DNA-binding region, H-T-H motif.

As to quaternary structure, interacts with sigma-54.

Its function is as follows. Required for activation of most nif operons, which are directly involved in nitrogen fixation. This is Nif-specific regulatory protein (nifA) from Rhizobium leguminosarum bv. trifolii.